A 644-amino-acid chain; its full sequence is 3D-(3,5/4)-trihydroxycyclohexane-1,2-dione hydrolase (644 aa).

Glu65 is a binding site for thiamine diphosphate. The thiamine pyrophosphate binding stretch occupies residues 442–522 (SLPGDLQRMW…INVLLFDNSG (81 aa)). Residues Asp493 and Asn520 each contribute to the Mg(2+) site.

Belongs to the TPP enzyme family. Mg(2+) serves as cofactor. The cofactor is thiamine diphosphate.

The catalysed reaction is 3D-3,5/4-trihydroxycyclohexane-1,2-dione + H2O = 5-deoxy-D-glucuronate + H(+). It functions in the pathway polyol metabolism; myo-inositol degradation into acetyl-CoA; acetyl-CoA from myo-inositol: step 3/7. Its function is as follows. Involved in the cleavage of the C1-C2 bond of 3D-(3,5/4)-trihydroxycyclohexane-1,2-dione (THcHDO) to yield 5-deoxy-glucuronate (5DG). The chain is 3D-(3,5/4)-trihydroxycyclohexane-1,2-dione hydrolase from Bacillus thuringiensis (strain Al Hakam).